A 249-amino-acid chain; its full sequence is MSEAAETLDGWYSLHLFYAVDWTTFRLIAEDDREAMITELETFIKDKTVARESHQGDHAIYNITGQKADLLLWFLRPEMKELNQIENEFNKLRIADYLIPTYSYVSVIELSNYLAGKSDEDPYENPHVKARLYPELPHSEYICFYPMDKRRNETYNWYMLPIEDRKTLMYNHGMIGRKYAGKIKQFITGSVGFDDYEWGVTLFSNDVLQFKKIVYEMRFDETTARYGEFGSFYIGHILNIEDFKQFFSI.

Fe-coproporphyrin III contacts are provided by residues Arg-131, 145–149 (YPMDK), His-172, and Gln-185. The active site involves Tyr-145.

This sequence belongs to the ChdC family. Type 1 subfamily. Fe-coproporphyrin III is required as a cofactor.

It carries out the reaction Fe-coproporphyrin III + 2 H2O2 + 2 H(+) = heme b + 2 CO2 + 4 H2O. The enzyme catalyses Fe-coproporphyrin III + H2O2 + H(+) = harderoheme III + CO2 + 2 H2O. The catalysed reaction is harderoheme III + H2O2 + H(+) = heme b + CO2 + 2 H2O. The protein operates within porphyrin-containing compound metabolism; protoheme biosynthesis. Its function is as follows. Involved in coproporphyrin-dependent heme b biosynthesis. Catalyzes the decarboxylation of Fe-coproporphyrin III (coproheme) to heme b (protoheme IX), the last step of the pathway. The reaction occurs in a stepwise manner with a three-propionate intermediate. The chain is Coproheme decarboxylase from Staphylococcus epidermidis (strain ATCC 12228 / FDA PCI 1200).